The sequence spans 347 residues: S-adenosylmethionine:tRNA ribosyltransferase-isomerase (347 aa).

This sequence belongs to the QueA family. As to quaternary structure, monomer.

The protein resides in the cytoplasm. It carries out the reaction 7-aminomethyl-7-carbaguanosine(34) in tRNA + S-adenosyl-L-methionine = epoxyqueuosine(34) in tRNA + adenine + L-methionine + 2 H(+). The protein operates within tRNA modification; tRNA-queuosine biosynthesis. Functionally, transfers and isomerizes the ribose moiety from AdoMet to the 7-aminomethyl group of 7-deazaguanine (preQ1-tRNA) to give epoxyqueuosine (oQ-tRNA). This chain is S-adenosylmethionine:tRNA ribosyltransferase-isomerase, found in Bordetella parapertussis (strain 12822 / ATCC BAA-587 / NCTC 13253).